We begin with the raw amino-acid sequence, 65 residues long: MKLITYVKEGESIDRVLKKCKQKFDKARIIRKLRERQQYIKPSERKRKILAKAKYREFRKLLADD.

The protein belongs to the bacterial ribosomal protein bS21 family.

In Aster yellows phytoplasma, this protein is Small ribosomal subunit protein bS21.